The primary structure comprises 524 residues: Beta-glucosidase 21 (524 aa).

Residues 1 to 24 (MALQKFPLMGLLLLLTILVSVTTA) form the signal peptide. Gln-55 is a binding site for a beta-D-glucoside. Residue Asn-61 is glycosylated (N-linked (GlcNAc...) asparagine). Residues His-158 and 203–204 (NE) contribute to the a beta-D-glucoside site. Glu-204 acts as the Proton donor in catalysis. A disulfide bridge connects residues Cys-223 and Cys-230. A beta-D-glucoside-binding positions include Tyr-346, Glu-418, Trp-468, 475 to 476 (EW), and Phe-484. Glu-418 (nucleophile) is an active-site residue. N-linked (GlcNAc...) asparagine glycosylation is present at Asn-494. A Prevents secretion from ER motif is present at residues 521–524 (RDEL).

It belongs to the glycosyl hydrolase 1 family. In terms of assembly, component of the PYK10 complex, at least composed of PYK10/BGLU23, BGLU21, BGLU22, JAL22, JAL23, PBP1/JAL30, PBP2/JAL31, JAL32, JAL33, JAL34, JAL35, GLL22 and GLL23. Expressed exclusively in roots.

The protein resides in the endoplasmic reticulum lumen. The enzyme catalyses Hydrolysis of terminal, non-reducing beta-D-glucosyl residues with release of beta-D-glucose.. Activated upon binding to PBP1 or PBP2. In terms of biological role, beta-D-glucosidase active on scopolin &gt;&gt; esculin &gt;&gt; 4-MU-glucoside &gt; DIMBOA-glucoside. No activity with pNP-glucoside, oNP-glucoside and sinigrin as substrates. The polypeptide is Beta-glucosidase 21 (Arabidopsis thaliana (Mouse-ear cress)).